The following is a 189-amino-acid chain: Riboflavin transporter RibU (189 aa).

At methionine 1–methionine 9 the chain is on the cytoplasmic side. Residues glutamine 10–threonine 29 form a helical membrane-spanning segment. Residues phenylalanine 30–leucine 44 lie on the Periplasmic side of the membrane. The helical intramembrane region spans aspartate 45–phenylalanine 56. The Cytoplasmic portion of the chain corresponds to threonine 57–phenylalanine 58. Residues glycine 59–serine 78 form a helical membrane-spanning segment. Topologically, residues methionine 79–proline 82 are periplasmic. A helical transmembrane segment spans residues valine 83–lysine 104. The Cytoplasmic portion of the chain corresponds to asparagine 105–arginine 107. A helical transmembrane segment spans residues serine 108–tyrosine 132. Residues phenylalanine 133–glycine 159 are Periplasmic-facing. Residues isoleucine 160–leucine 182 traverse the membrane as a helical segment. At alanine 183–isoleucine 189 the chain is on the cytoplasmic side.

The protein belongs to the prokaryotic riboflavin transporter (P-RFT) (TC 2.A.87) family. In terms of assembly, forms a stable energy-coupling factor (ECF) transporter complex composed of a membrane-embedded substrate-binding protein (S component), 2 ATP-binding proteins (A component) and 2 transmembrane proteins (T component). May be able to interact with more than 1 S component at a time.

The protein localises to the cell membrane. Functionally, mediates riboflavin uptake, may also transport FMN and roseoflavin. Probably a riboflavin-binding protein that interacts with the energy-coupling factor (ECF) ABC-transporter complex. Unlike classic ABC transporters this ECF transporter provides the energy necessary to transport a number of different substrates. The substrates themselves are bound by transmembrane, not extracytoplasmic soluble proteins. This Staphylococcus aureus (strain TCH60) protein is Riboflavin transporter RibU (ribU).